The primary structure comprises 354 residues: Tryptophan--tRNA ligase (354 aa).

ATP-binding positions include 13–15 (QPT) and 21–22 (GN). Residues 14-22 (PTGNLHLGN) carry the 'HIGH' region motif. An L-tryptophan-binding site is contributed by aspartate 137. ATP contacts are provided by residues 149 to 151 (GDD), valine 208, and 217 to 221 (KMSKS). Residues 217–221 (KMSKS) carry the 'KMSKS' region motif.

The protein belongs to the class-I aminoacyl-tRNA synthetase family. Homodimer.

The protein resides in the cytoplasm. It catalyses the reaction tRNA(Trp) + L-tryptophan + ATP = L-tryptophyl-tRNA(Trp) + AMP + diphosphate + H(+). Catalyzes the attachment of tryptophan to tRNA(Trp). The polypeptide is Tryptophan--tRNA ligase (Agrobacterium fabrum (strain C58 / ATCC 33970) (Agrobacterium tumefaciens (strain C58))).